The sequence spans 241 residues: Small ribosomal subunit protein uS2 (241 aa).

Belongs to the universal ribosomal protein uS2 family.

The sequence is that of Small ribosomal subunit protein uS2 from Citrobacter koseri (strain ATCC BAA-895 / CDC 4225-83 / SGSC4696).